Consider the following 251-residue polypeptide: Coproheme decarboxylase (251 aa).

Fe-coproporphyrin III is bound by residues R133, 147 to 151, H174, Q187, and S225; that span reads YPMSK. Residue Y147 is part of the active site.

It belongs to the ChdC family. Type 1 subfamily. Homopentamer. Homohexamer in solution. Fe-coproporphyrin III is required as a cofactor.

It carries out the reaction Fe-coproporphyrin III + 2 H2O2 + 2 H(+) = heme b + 2 CO2 + 4 H2O. The enzyme catalyses Fe-coproporphyrin III + H2O2 + H(+) = harderoheme III + CO2 + 2 H2O. It catalyses the reaction harderoheme III + H2O2 + H(+) = heme b + CO2 + 2 H2O. The protein operates within porphyrin-containing compound metabolism; protoheme biosynthesis. Functionally, involved in coproporphyrin-dependent heme b biosynthesis. Catalyzes the decarboxylation of Fe-coproporphyrin III (coproheme) to heme b (protoheme IX), the last step of the pathway. The reaction occurs in a stepwise manner with a three-propionate intermediate. The chain is Coproheme decarboxylase from Listeria monocytogenes serovar 1/2a (strain ATCC BAA-679 / EGD-e).